The primary structure comprises 209 residues: Protein-L-isoaspartate O-methyltransferase (209 aa).

The active site involves S59.

This sequence belongs to the methyltransferase superfamily. L-isoaspartyl/D-aspartyl protein methyltransferase family. As to quaternary structure, monomer.

Its subcellular location is the cytoplasm. The catalysed reaction is [protein]-L-isoaspartate + S-adenosyl-L-methionine = [protein]-L-isoaspartate alpha-methyl ester + S-adenosyl-L-homocysteine. Catalyzes the methyl esterification of L-isoaspartyl residues in peptides and proteins that result from spontaneous decomposition of normal L-aspartyl and L-asparaginyl residues. It plays a role in the repair and/or degradation of damaged proteins. The chain is Protein-L-isoaspartate O-methyltransferase (pcm) from Helicobacter pylori (strain J99 / ATCC 700824) (Campylobacter pylori J99).